The following is a 1068-amino-acid chain: Receptor-like protein 13 (1068 aa).

Positions Met-1 to Gly-23 are cleaved as a signal peptide. Residues Tyr-24–Glu-986 are Extracellular-facing. Asn-59 and Asn-97 each carry an N-linked (GlcNAc...) asparagine glycan. 19 LRR repeats span residues Phe-104–Asp-129, Leu-139–Ala-162, Thr-164–Asp-187, Leu-188–Ser-212, Phe-216–Ser-239, Thr-241–Asp-264, Leu-265–Leu-290, Lys-292–Lys-315, Trp-325–Leu-349, Thr-350–Leu-373, Ser-375–Asn-397, Leu-398–Pro-423, Lys-424–Gln-447, Lys-448–Asn-471, Asn-472–Leu-497, Phe-499–Trp-517, Leu-519–Met-543, Lys-544–Gly-567, and Tyr-569–Arg-594. Asn-153 carries an N-linked (GlcNAc...) asparagine glycan. A glycan (N-linked (GlcNAc...) asparagine) is linked at Asn-202. An N-linked (GlcNAc...) asparagine glycan is attached at Asn-279. N-linked (GlcNAc...) asparagine glycosylation is present at Asn-397. N-linked (GlcNAc...) asparagine glycans are attached at residues Asn-471, Asn-482, and Asn-501. N-linked (GlcNAc...) asparagine glycans are attached at residues Asn-570 and Asn-591. Residues Trp-596–Ser-615 form an LRR 20; degenerate repeat. LRR repeat units lie at residues Leu-616–Glu-639, Gln-641–Ile-664, Ser-665–Ile-688, His-690–Leu-710, and Leu-711–Gln-734. Asn-663 is a glycosylation site (N-linked (GlcNAc...) asparagine). Asn-700 is a glycosylation site (N-linked (GlcNAc...) asparagine). Residues Asn-735, Asn-745, Asn-771, Asn-780, and Asn-822 are each glycosylated (N-linked (GlcNAc...) asparagine). LRR repeat units lie at residues Ile-736–Leu-757 and Ser-758–Thr-781. LRR repeat units lie at residues Leu-846–Leu-870, Val-871–Gly-893, Lys-895–Met-918, and Ser-920–Thr-943. N-linked (GlcNAc...) asparagine glycans are attached at residues Asn-877 and Asn-882. Asn-925 and Asn-930 each carry an N-linked (GlcNAc...) asparagine glycan. A helical membrane pass occupies residues Ser-987 to Leu-1007. Topologically, residues Ser-1008–Thr-1068 are cytoplasmic.

Belongs to the RLP family.

It localises to the cell membrane. This is Receptor-like protein 13 from Arabidopsis thaliana (Mouse-ear cress).